The primary structure comprises 249 residues: Demethylmenaquinone methyltransferase (249 aa).

S-adenosyl-L-methionine-binding positions include T67, D87, and 115-116; that span reads DA.

It belongs to the class I-like SAM-binding methyltransferase superfamily. MenG/UbiE family.

The enzyme catalyses a 2-demethylmenaquinol + S-adenosyl-L-methionine = a menaquinol + S-adenosyl-L-homocysteine + H(+). The protein operates within quinol/quinone metabolism; menaquinone biosynthesis; menaquinol from 1,4-dihydroxy-2-naphthoate: step 2/2. Methyltransferase required for the conversion of demethylmenaquinol (DMKH2) to menaquinol (MKH2). This is Demethylmenaquinone methyltransferase from Leptospira interrogans serogroup Icterohaemorrhagiae serovar copenhageni (strain Fiocruz L1-130).